The primary structure comprises 521 residues: CDP-diacylglycerol--glycerol-3-phosphate 3-phosphatidyltransferase (521 aa).

91–98 (ASLYLGKS) serves as a coordination point for ATP. PLD phosphodiesterase domains follow at residues 177 to 203 (GLGLQHMKIYGFDNEVILSGANLSNDY) and 419 to 457 (NGWSYHAKGIWLSARDKNDANNWKPFITVIGSSNYTRRA). Catalysis depends on residues H182, K184, and D189.

Belongs to the CDP-alcohol phosphatidyltransferase class-II family.

The protein localises to the mitochondrion. The enzyme catalyses a CDP-1,2-diacyl-sn-glycerol + sn-glycerol 3-phosphate = a 1,2-diacyl-sn-glycero-3-phospho-(1'-sn-glycero-3'-phosphate) + CMP + H(+). It participates in phospholipid metabolism; phosphatidylglycerol biosynthesis; phosphatidylglycerol from CDP-diacylglycerol: step 1/2. Essential for the viability of mitochondrial petite mutant. Catalyzes the committed step to the synthesis of the acidic phospholipids. The sequence is that of CDP-diacylglycerol--glycerol-3-phosphate 3-phosphatidyltransferase (PGS1) from Saccharomyces cerevisiae (strain ATCC 204508 / S288c) (Baker's yeast).